Reading from the N-terminus, the 1045-residue chain is Probable beta-glucosidase E (1045 aa).

Residues 1–74 form a disordered region; that stretch reads MAPPDSTHGG…SGSYQLRPVD (74 aa). Residues 1–163 are Cytoplasmic-facing; that stretch reads MAPPDSTHGG…PVKYARIWWR (163 aa). The segment covering 11-20 has biased composition (basic and acidic residues); that stretch reads SFRDHLKTND. A helical; Signal-anchor for type II membrane protein membrane pass occupies residues 164–184; sequence TLLAVIVTLAVVVWGFLSFAV. Residues 185–1045 lie on the Extracellular side of the membrane; it reads SHREEPKVWP…SRDLPLMGEY (861 aa). 3 N-linked (GlcNAc...) asparagine glycosylation sites follow: asparagine 226, asparagine 234, and asparagine 402. Aspartate 430 is a catalytic residue. Asparagine 473, asparagine 512, asparagine 577, asparagine 893, asparagine 902, and asparagine 988 each carry an N-linked (GlcNAc...) asparagine glycan.

This sequence belongs to the glycosyl hydrolase 3 family.

It is found in the cell membrane. It catalyses the reaction Hydrolysis of terminal, non-reducing beta-D-glucosyl residues with release of beta-D-glucose.. It participates in glycan metabolism; cellulose degradation. Its function is as follows. Beta-glucosidases are one of a number of cellulolytic enzymes involved in the degradation of cellulosic biomass. Catalyzes the last step releasing glucose from the inhibitory cellobiose. This chain is Probable beta-glucosidase E (bglE), found in Neosartorya fischeri (strain ATCC 1020 / DSM 3700 / CBS 544.65 / FGSC A1164 / JCM 1740 / NRRL 181 / WB 181) (Aspergillus fischerianus).